The primary structure comprises 607 residues: Glutamyl-tRNA(Gln) amidotransferase subunit E (607 aa).

Residues 399 to 428 (GVPEETRGANPDGTTRFLRPRPGAARMYPE) are disordered.

This sequence belongs to the GatB/GatE family. GatE subfamily. In terms of assembly, heterodimer of GatD and GatE.

It catalyses the reaction L-glutamyl-tRNA(Gln) + L-glutamine + ATP + H2O = L-glutaminyl-tRNA(Gln) + L-glutamate + ADP + phosphate + H(+). Functionally, allows the formation of correctly charged Gln-tRNA(Gln) through the transamidation of misacylated Glu-tRNA(Gln) in organisms which lack glutaminyl-tRNA synthetase. The reaction takes place in the presence of glutamine and ATP through an activated gamma-phospho-Glu-tRNA(Gln). The GatDE system is specific for glutamate and does not act on aspartate. In Pyrobaculum neutrophilum (strain DSM 2338 / JCM 9278 / NBRC 100436 / V24Sta) (Thermoproteus neutrophilus), this protein is Glutamyl-tRNA(Gln) amidotransferase subunit E.